A 505-amino-acid polypeptide reads, in one-letter code: 2-isopropylmalate synthase (505 aa).

Residues 5-267 (VYIFDTTLRD…YTNIKTEEIY (263 aa)) enclose the Pyruvate carboxyltransferase domain. The Mn(2+) site is built by aspartate 14, histidine 202, histidine 204, and asparagine 238. Residues 391-505 (TLEYLHISSG…VNKLIWDSQK (115 aa)) are regulatory domain.

Belongs to the alpha-IPM synthase/homocitrate synthase family. LeuA type 1 subfamily. Homodimer. Requires Mn(2+) as cofactor.

The protein resides in the cytoplasm. The enzyme catalyses 3-methyl-2-oxobutanoate + acetyl-CoA + H2O = (2S)-2-isopropylmalate + CoA + H(+). It participates in amino-acid biosynthesis; L-leucine biosynthesis; L-leucine from 3-methyl-2-oxobutanoate: step 1/4. Catalyzes the condensation of the acetyl group of acetyl-CoA with 3-methyl-2-oxobutanoate (2-ketoisovalerate) to form 3-carboxy-3-hydroxy-4-methylpentanoate (2-isopropylmalate). This Pelotomaculum thermopropionicum (strain DSM 13744 / JCM 10971 / SI) protein is 2-isopropylmalate synthase.